The chain runs to 335 residues: Syntaxin-18 (335 aa).

The Cytoplasmic portion of the chain corresponds to 1 to 309 (MAVDITLLFR…EDIREAIKNN (309 aa)). Composition is skewed to basic and acidic residues over residues 168-182 (KLEP…ESTS) and 192-208 (KDSE…EKIL). The interval 168-226 (KLEPEPNTKTRESTSSEKVSQSPSKDSEENPATEERPEKILAETQPELGTWGDGKGEDE) is disordered. The 63-residue stretch at 243–305 (IGEMNSLFDE…KEGNEDIREA (63 aa)) folds into the t-SNARE coiled-coil homology domain. Residues 310 to 330 (AGFRVWILFFLVMCSFSLLFL) form a helical; Anchor for type IV membrane protein membrane-spanning segment. Residues 331 to 335 (DWYDS) are Vesicular-facing.

This sequence belongs to the syntaxin family. As to quaternary structure, component of a SNARE complex consisting of STX18, USE1L, BNIP1/SEC20L, and SEC22B. RINT1/TIP20L and ZW10 are associated with the complex through interaction with BNIP1/SEC20L. Interacts directly with USE1L and BNIP1/SEC20L. Ubiquitous.

The protein localises to the endoplasmic reticulum membrane. Its subcellular location is the golgi apparatus membrane. Its function is as follows. Syntaxin that may be involved in targeting and fusion of Golgi-derived retrograde transport vesicles with the ER. The chain is Syntaxin-18 (STX18) from Homo sapiens (Human).